A 468-amino-acid chain; its full sequence is 5-carboxymethyl-2-hydroxymuconate semialdehyde dehydrogenase (468 aa).

Glu-244 is an active-site residue. The Nucleophile role is filled by Cys-278.

Belongs to the aldehyde dehydrogenase family. As to quaternary structure, homodimer.

The enzyme catalyses 2-hydroxy-5-carboxymethylmuconate semialdehyde + NAD(+) + H2O = (2E,4Z)-5-hydroxypenta-2,4-diene-1,2,5-tricarboxylate + NADH + 2 H(+). Its pathway is aromatic compound metabolism; 4-hydroxyphenylacetate degradation; pyruvate and succinate semialdehyde from 4-hydroxyphenylacetate: step 3/7. Functionally, catalyzes the conversion of 5-carboxymethyl-2-hydroxy-muconic semialdehyde (CHMS) into 5-carboxymethyl-2-hydroxy-muconic acid (CHM or (2E,4Z)-5-hydroxypenta-2,4-diene-1,2,5-tricarboxylate). Is involved in a meta-cleavage pathway for the catabolism of 4-hydroxyphenylacetate (4-HPA) via homoprotocatechuate (HPC or 3,4-dihydroxyphenylacetate). The chain is 5-carboxymethyl-2-hydroxymuconate semialdehyde dehydrogenase from Escherichia coli.